Here is a 275-residue protein sequence, read N- to C-terminus: NH(3)-dependent NAD(+) synthetase (275 aa).

ATP is bound at residue 50 to 57 (GISGGVDS). Position 56 (aspartate 56) interacts with Mg(2+). Deamido-NAD(+) is bound at residue arginine 147. ATP is bound at residue threonine 167. Mg(2+) is bound at residue glutamate 172. Deamido-NAD(+)-binding residues include lysine 180 and aspartate 187. ATP is bound by residues lysine 196 and threonine 218. 267 to 268 (HK) provides a ligand contact to deamido-NAD(+).

It belongs to the NAD synthetase family. Homodimer.

The enzyme catalyses deamido-NAD(+) + NH4(+) + ATP = AMP + diphosphate + NAD(+) + H(+). Its pathway is cofactor biosynthesis; NAD(+) biosynthesis; NAD(+) from deamido-NAD(+) (ammonia route): step 1/1. Catalyzes the ATP-dependent amidation of deamido-NAD to form NAD. Uses ammonia as a nitrogen source. In Pseudomonas syringae pv. syringae (strain B728a), this protein is NH(3)-dependent NAD(+) synthetase.